We begin with the raw amino-acid sequence, 492 residues long: Solute carrier family 2, facilitated glucose transporter member 1 (492 aa).

N-acetylmethionine is present on Met1. Residues Met1–Arg11 lie on the Cytoplasmic side of the membrane. A helical membrane pass occupies residues Leu12 to Ile33. Residues Asn34–Ser66 lie on the Extracellular side of the membrane. An N-linked (GlcNAc...) asparagine glycan is attached at Asn45. A helical membrane pass occupies residues Leu67–Val87. Over Asn88–Phe90 the chain is Cytoplasmic. Residues Gly91–Phe112 form a helical membrane-spanning segment. Topologically, residues Ser113–Glu120 are extracellular. A helical transmembrane segment spans residues Met121–Val144. The Cytoplasmic portion of the chain corresponds to Gly145–Ala155. Residues Leu156–Leu176 form a helical membrane-spanning segment. Gln161 serves as a coordination point for D-glucose. The Extracellular portion of the chain corresponds to Asp177–Leu185. The chain crosses the membrane as a helical span at residues Trp186–Phe206. Residues Cys207–Pro271 lie on the Cytoplasmic side of the membrane. Position 226 is a phosphoserine (Ser226). Residues Ile272 to Tyr293 form a helical membrane-spanning segment. D-glucose is bound by residues Gln282 to Gln283 and Asn288. At Ser294–Pro306 the chain is on the extracellular side. A helical transmembrane segment spans residues Val307 to Val328. Asn317 is a binding site for D-glucose. Residues Glu329 to Arg334 lie on the Cytoplasmic side of the membrane. The chain crosses the membrane as a helical span at residues Thr335–Leu355. Topologically, residues Ala356–Ser365 are extracellular. The chain crosses the membrane as a helical span at residues Tyr366–Trp388. The D-glucose site is built by Glu380 and Trp388. The Cytoplasmic portion of the chain corresponds to Phe389–Pro401. A helical transmembrane segment spans residues Ala402–Phe422. Over Gln423–Cys429 the chain is Extracellular. The chain crosses the membrane as a helical span at residues Gly430–Phe450. At Lys451–Val492 the chain is on the cytoplasmic side. Ser465 is subject to Phosphoserine. The disordered stretch occupies residues Arg468–Val492. Thr478 carries the phosphothreonine modification. Residue Ser490 is modified to Phosphoserine.

Belongs to the major facilitator superfamily. Sugar transporter (TC 2.A.1.1) family. Glucose transporter subfamily. Found in a complex with ADD2, DMTN and SLC2A1. Interacts (via C-terminus cytoplasmic region) with DMTN isoform 2. Interacts with SNX27; the interaction is required when endocytosed to prevent degradation in lysosomes and promote recycling to the plasma membrane. Interacts with GIPC (via PDZ domain). Interacts with STOM. Interacts with SGTA (via Gln-rich region). Interacts with isoform 1 of BSG. Interacts with SMIM43; the interaction may promote SLC2A1-mediated glucose transport to meet the energy needs of mesendoderm differentiation. Post-translationally, phosphorylation at Ser-226 by PKC promotes glucose uptake by increasing cell membrane localization. As to expression, retina (at protein level).

The protein resides in the cell membrane. It localises to the photoreceptor inner segment. It carries out the reaction D-glucose(out) = D-glucose(in). Its activity is regulated as follows. The uptake of glucose is inhibited by cytochalasin B. Glucose uptake is increased in response to phorbol ester 12-O-tetradecanoylphorbol-13-acetate (TPA) treatment: TPA-induced glucose uptake requires phosphorylation at Ser-226. In terms of biological role, facilitative glucose transporter, which is responsible for constitutive or basal glucose uptake. Has a very broad substrate specificity; can transport a wide range of aldoses including both pentoses and hexoses. Most important energy carrier of the brain: present at the blood-brain barrier and assures the energy-independent, facilitative transport of glucose into the brain. In association with BSG and NXNL1, promotes retinal cone survival by increasing glucose uptake into photoreceptors. Required for mesendoderm differentiation. This chain is Solute carrier family 2, facilitated glucose transporter member 1, found in Mus musculus (Mouse).